Here is a 181-residue protein sequence, read N- to C-terminus: Adenylyl-sulfate kinase (181 aa).

Residue 13–20 coordinates ATP; that stretch reads GVSGAGKS. The active-site Phosphoserine intermediate is serine 87.

It belongs to the APS kinase family.

The catalysed reaction is adenosine 5'-phosphosulfate + ATP = 3'-phosphoadenylyl sulfate + ADP + H(+). It participates in sulfur metabolism; hydrogen sulfide biosynthesis; sulfite from sulfate: step 2/3. Its function is as follows. Catalyzes the synthesis of activated sulfate. The protein is Adenylyl-sulfate kinase of Burkholderia ambifaria (strain ATCC BAA-244 / DSM 16087 / CCUG 44356 / LMG 19182 / AMMD) (Burkholderia cepacia (strain AMMD)).